A 1292-amino-acid chain; its full sequence is SH3 and multiple ankyrin repeat domains protein 2 (1292 aa).

The PDZ domain occupies threonine 56 to threonine 150. 7 disordered regions span residues proline 155–serine 176, methionine 331–valine 393, isoleucine 488–aspartate 508, serine 604–aspartate 656, alanine 671–asparagine 743, leucine 774–glycine 811, and isoleucine 938–serine 968. Over residues isoleucine 338–proline 354 the composition is skewed to pro residues. Low complexity predominate over residues serine 355–proline 365. The span at phenylalanine 375 to proline 384 shows a compositional bias: polar residues. Low complexity predominate over residues serine 492 to serine 504. Residues serine 604 to arginine 623 show a composition bias toward polar residues. Positions lysine 719–asparagine 743 are enriched in basic and acidic residues. Positions valine 941–glutamate 952 are enriched in basic and acidic residues. The segment covering threonine 953–serine 968 has biased composition (low complexity). Positions proline 991–proline 997 match the SH3-binding motif. Positions threonine 1087–valine 1115 are disordered. Positions glycine 1098 to valine 1115 are enriched in polar residues. The region spanning tryptophan 1229–arginine 1292 is the SAM domain.

The protein belongs to the SHANK family.

The protein localises to the cytoplasm. It is found in the synapse. The protein resides in the postsynaptic density. Functionally, seems to be an adapter protein in the postsynaptic density (PSD) of excitatory synapses that interconnects receptors of the postsynaptic membrane including NMDA-type and metabotropic glutamate receptors, and the actin-based cytoskeleton. May play a role in the structural and functional organization of the dendritic spine and synaptic junction. This is SH3 and multiple ankyrin repeat domains protein 2 (shank2) from Xenopus laevis (African clawed frog).